We begin with the raw amino-acid sequence, 461 residues long: Phosphatidate cytidylyltransferase 1 (461 aa).

The interval 1–68 (MLELRHRGGC…PEVPPSSDRT (68 aa)) is disordered. Omega-N-methylarginine is present on R7. Residues 22–56 (REGEAAGGDHETESTSDKETDIDDRYGDLDARGDS) show a composition bias toward basic and acidic residues. S35 and S37 each carry phosphoserine. Transmembrane regions (helical) follow at residues 96–116 (MISL…LLVL), 149–169 (FLLC…FATF), 183–203 (HRFI…LSLV), 230–250 (LVIQ…SSVI), 279–299 (GFIG…YVLS), and 357–377 (IALS…ASGF).

The protein belongs to the CDS family. In terms of assembly, homodimer. Interacts with FOS; this interaction may enhance catalytic activity. The cofactor is Mg(2+). In terms of tissue distribution, brain, retina and testis. Found in cerebellar Purkinje cells, pineal body, inner segment of photoreceptor cells and postmitotic spermatocytes and spermatids.

The protein resides in the endoplasmic reticulum membrane. The catalysed reaction is a 1,2-diacyl-sn-glycero-3-phosphate + CTP + H(+) = a CDP-1,2-diacyl-sn-glycerol + diphosphate. The enzyme catalyses 1-octadecanoyl-2-(5Z,8Z,11Z,14Z-eicosatetraenoyl)-sn-glycero-3-phosphate + CTP + H(+) = 1-octadecanoyl-2-(5Z,8Z,11Z,14Z-eicosatetraenoyl)-sn-glycero-3-cytidine-5'-diphosphate + diphosphate. It carries out the reaction 1-octadecanoyl-2-(9Z,12Z-octadecadienoyl)-sn-glycero-3-phosphate + CTP + H(+) = 1-octadecanoyl-2-(9Z,12Z-octadecadienoyl)-sn-glycero-3-cytidine-5'-diphosphate + diphosphate. It catalyses the reaction 1-hexadecanoyl-2-(5Z,8Z,11Z,14Z-eicosatetraenoyl)-sn-glycero-3-phosphate + CTP + H(+) = 1-hexadecanoyl-2-(5Z,8Z,11Z,14Z-eicosatetraenoyl)-sn-glycero-3-cytidine-5'-diphosphate + diphosphate. The catalysed reaction is 1,2-di-(5Z,8Z,11Z,14Z)-eicosatetraenoyl-sn-glycero-3-phosphate + CTP + H(+) = 1,2-di-(5Z,8Z,11Z,14Z-eicosatetraenoyl)-sn-glycero-3-cytidine-5'-diphosphate + diphosphate. The enzyme catalyses 1-octadecanoyl-2-(9Z-octadecenoyl)-sn-glycero-3-phosphate + CTP + H(+) = 1-octadecanoyl-2-(9Z-octadecenoyl)-sn-glycero-3-cytidine-5'-diphosphate + diphosphate. It carries out the reaction 1-octadecanoyl-2-(4Z,7Z,10Z,13Z,16Z,19Z-docosahexaenoyl)-sn-glycero-3-phosphate + CTP + H(+) = 1-octadecanoyl-2-(4Z,7Z,10Z,13Z,16Z,19Z-docosahexaenoyl)-sn-glycero-3-cytidine-5'-diphosphate + diphosphate. It catalyses the reaction 1,2-di-(9Z,12Z-octadecadienoyl)-sn-glycero-3-phosphate + CTP + H(+) = 1,2-di-(9Z,12Z-octadecadienoyl)-sn-glycero-3-cytidine-5'-diphosphate + diphosphate. The catalysed reaction is 1,2-di-(9Z-octadecenoyl)-sn-glycero-3-phosphate + CTP + H(+) = 1,2-di-(9Z-octadecenoyl)-sn-glycero-3-cytidine-5'-diphosphate + diphosphate. The protein operates within phospholipid metabolism; CDP-diacylglycerol biosynthesis; CDP-diacylglycerol from sn-glycerol 3-phosphate: step 3/3. Activated by GTP. Inhibited by CDP-diacylglycerol and by phosphatidylglycerol 4,5-bisphosphate (PPI2). Catalyzes the conversion of phosphatidic acid (PA) to CDP-diacylglycerol (CDP-DAG), an essential intermediate in the synthesis of phosphatidylglycerol, cardiolipin and phosphatidylinositol. Exhibits almost no acyl chain preference for PA, showing no discrimination for the sn-1/sn-2 acyl chain composition of PAs. Plays an important role in regulatinng the growth of lipid droplets which are storage organelles at the center of lipid and energy homeostasis. Positively regulates the differentiation and development of adipocytes. In Rattus norvegicus (Rat), this protein is Phosphatidate cytidylyltransferase 1.